The primary structure comprises 373 residues: Schlafen-like protein 1 (373 aa).

Residues Met-1–Pro-67 form a disordered region. The segment at Lys-247 to Val-373 is SLFN-like fold.

It belongs to the Schlafen family. In terms of assembly, component of the trimeric PUCH (precursor of 21U RNA 5'-end cleavage holoenzyme) complex; consisting of tofu-1, tofu-2 and either slfl-3 or slfl-4; which is required for processing of piRNA precursors. Within the complex, interacts (via N-terminus) with tofu-2 (via N-terminus); the interaction stabilizes tofu-2 and may form a functional nuclease. Within the complex, required for the interaction of tofu-2 (via N-terminus) with slfl-3 (via N-terminus). Interacts (via residues 82-172) with the PETISCO complex subunit tofu-6 (via residues 120-314); the interaction between the PETISCO and PUCH complex members enhances piRNA production in vivo. As to expression, expressed in the germline.

It is found in the cytoplasm. Functionally, component of the trimeric PUCH (precursor of 21U RNA 5'-end cleavage holoenzyme) complex, that acts as an endoribonuclease processing the 5'-end of precursor Piwi-interacting RNAs (piRNAs). The PUCH complex consists of tofu-1, tofu-2 and either slfl-3 or slfl-4, with tofu-2 exhibiting endoribonuclease activity. PUCH-mediated processing strictly requires a 7-methyl-G cap (m7 G-cap) and an uracil at position three (U3). PUCH also exhibits a strict bias for piRNA precursors with an A or G at position 1. Mature piRNA production is enhanced by the interaction of PUCH with the PETISCO complex, which is stabilizing piRNA precursors and allows their processing by PUCH. In Caenorhabditis elegans, this protein is Schlafen-like protein 1.